Here is a 446-residue protein sequence, read N- to C-terminus: MMTTLRKLPLAVAVAAGMMSVQAMAVDFHGYARSGIGWTGSGGEQQCFQTTGAQSKYRLGNECETYAELKLGQEVWKEGDKSFYFDTNVAYSVAQQNDWEATSPAFREANVQGKNLIDALPGATIWAGKRFYQRHDVHMIDFYYWDISGPGAGLENIDLGFGKLSLAATRSSEAGGSSSFASDNIYDYVNETANDVFDVRLAQMEINPGGTLELGVDYGRANLRDDYRLVDGASKDGWMFTAEHTQSMLKGFNKFVVQYATDAMTSQGKGLNQGSGVAFDNEHFAYNINNNGHLLRILDHGAISLGDNWDMMYVGMYQDINWDNDNGTKWWTVGIRPMYKWTPIMSTLLEVGYDNVESQRTGDKNNQYKITLAQQWQAGDSIWSRPAIRVFATYAKWDEKWGYDYNDNSKTNPNYGKAVPANFEGGSFGRGDSDEWTFGAQMEIWW.

Positions 1–25 (MMTTLRKLPLAVAVAAGMMSVQAMA) are cleaved as a signal peptide.

This sequence belongs to the porin LamB (TC 1.B.3) family. In terms of assembly, homotrimer formed of three 18-stranded antiparallel beta-barrels, containing three independent channels.

It is found in the cell outer membrane. It carries out the reaction beta-maltose(in) = beta-maltose(out). Functionally, involved in the transport of maltose and maltodextrins. This is Maltoporin from Escherichia fergusonii (strain ATCC 35469 / DSM 13698 / CCUG 18766 / IAM 14443 / JCM 21226 / LMG 7866 / NBRC 102419 / NCTC 12128 / CDC 0568-73).